The primary structure comprises 409 residues: Outer membrane protein assembly factor BamB (409 aa).

The signal sequence occupies residues 1–34 (MAGNILLLILDYVFHAGSRTLRVCILSLLILLSG). The N-palmitoyl cysteine moiety is linked to residue C35. C35 carries the S-diacylglycerol cysteine lipid modification.

Belongs to the BamB family. In terms of assembly, part of the Bam complex.

It is found in the cell outer membrane. Its function is as follows. Part of the outer membrane protein assembly complex, which is involved in assembly and insertion of beta-barrel proteins into the outer membrane. The chain is Outer membrane protein assembly factor BamB from Nitrosomonas eutropha (strain DSM 101675 / C91 / Nm57).